We begin with the raw amino-acid sequence, 818 residues long: Catenin beta (818 aa).

Polar residues-rich tracts occupy residues 1 to 21 (METYQQMNSGSGPRSVGTPQG) and 48 to 66 (GDSGIQSGATTQAPPSVSS). Disordered stretches follow at residues 1-24 (METYQQMNSGSGPRSVGTPQGQYM) and 48-71 (GDSGIQSGATTQAPPSVSSKHGLD). 7 ARM repeats span residues 164 to 203 (NYQDDADLATRAIPELTKLLNDEDQVVVSQAAMMVHQLSK), 248 to 287 (RQGLLTIFKSGGIPALVKLLSSPVESVLFYAITTLHNLLL), 412 to 451 (DAATKSSDIEGLLQMLVQLLASNDINIVTCAAGILSNLTC), 454 to 495 (QRNK…HLTS), 501 to 541 (EMAQ…NLAL), 543 to 582 (PANHAPLREHGAIPRIVQLLIRAHQDTQRRATAGSGNTSA), and 648 to 687 (KEGAEMIEQEGTTAPLTELLHSRNEGVATYAAAVLFRMSE). The tract at residues 732–818 (QGFRGYQGSG…QMAAWFDTDL (87 aa)) is disordered.

This sequence belongs to the beta-catenin family.

It localises to the cytoplasm. It is found in the cytoskeleton. In terms of biological role, binds to the cytoplasmic domain of the cell-cell adhesion molecule E-cadherin, and perhaps to other (membrane) proteins. The association of catenins to cadherins produces a complex which is linked to the actin filament network, and which seems to be of primary importance for cadherins cell-adhesion properties. This Urechis caupo (Innkeeper worm) protein is Catenin beta.